Reading from the N-terminus, the 585-residue chain is Probable inactive serine/threonine-protein kinase slob1 (585 aa).

The segment at 21–82 adopts an FYVE-type zinc-finger fold; that stretch reads DQSSLECNDC…LCRSCNNSFE (62 aa). Positions 27, 30, 43, 46, 51, 54, 74, and 77 each coordinate Zn(2+). Positions 108–478 constitute a Protein kinase domain; the sequence is SKPLQDIGHT…STSLLNNSFN (371 aa). 2 stretches are compositionally biased toward low complexity: residues 426–456 and 466–503; these read ISKL…NISS and LPSS…ISSP. The segment at 426-585 is disordered; sequence ISKLSSSSSN…SLKPSSTKKK (160 aa). The segment covering 513 to 532 has biased composition (pro residues); that stretch reads TPPPPPPPPKSAPPPPPPPS. The segment covering 533–542 has biased composition (low complexity); sequence SSKLPPSSSS. The WH2 domain occupies 542–562; the sequence is SRNSLLESIRNADNAKKLKKT.

The protein belongs to the protein kinase superfamily. Ser/Thr protein kinase family.

This Dictyostelium discoideum (Social amoeba) protein is Probable inactive serine/threonine-protein kinase slob1 (slob1).